Reading from the N-terminus, the 287-residue chain is Ribonuclease Z (287 aa).

7 residues coordinate Zn(2+): H64, H66, D68, H69, H124, D191, and H250. D68 functions as the Proton acceptor in the catalytic mechanism.

The protein belongs to the RNase Z family. As to quaternary structure, homodimer. It depends on Zn(2+) as a cofactor.

It carries out the reaction Endonucleolytic cleavage of RNA, removing extra 3' nucleotides from tRNA precursor, generating 3' termini of tRNAs. A 3'-hydroxy group is left at the tRNA terminus and a 5'-phosphoryl group is left at the trailer molecule.. In terms of biological role, zinc phosphodiesterase, which displays some tRNA 3'-processing endonuclease activity. Probably involved in tRNA maturation, by removing a 3'-trailer from precursor tRNA. This is Ribonuclease Z from Pyrobaculum calidifontis (strain DSM 21063 / JCM 11548 / VA1).